The following is a 126-amino-acid chain: Glycine cleavage system H protein (126 aa).

One can recognise a Lipoyl-binding domain in the interval 22–104 (IATVGITAFA…YGRGWLFKVE (83 aa)). K63 bears the N6-lipoyllysine mark.

This sequence belongs to the GcvH family. In terms of assembly, the glycine cleavage system is composed of four proteins: P, T, L and H. (R)-lipoate is required as a cofactor.

Its function is as follows. The glycine cleavage system catalyzes the degradation of glycine. The H protein shuttles the methylamine group of glycine from the P protein to the T protein. In Thermobifida fusca (strain YX), this protein is Glycine cleavage system H protein.